Reading from the N-terminus, the 246-residue chain is Osmotin-like protein OSML13 (246 aa).

The signal sequence occupies residues 1–21 (MAYLRSSFVFFLLAFVTYTYA). Intrachain disulfides connect Cys-30-Cys-225, Cys-72-Cys-82, Cys-87-Cys-93, Cys-141-Cys-213, Cys-146-Cys-196, Cys-154-Cys-164, Cys-168-Cys-177, and Cys-178-Cys-183.

It belongs to the thaumatin family.

This is Osmotin-like protein OSML13 from Solanum commersonii (Commerson's wild potato).